Reading from the N-terminus, the 475-residue chain is Ribulose bisphosphate carboxylase large chain (475 aa).

A propeptide spanning residues 1 to 2 (MS) is cleaved from the precursor. Pro3 is subject to N-acetylproline. N6,N6,N6-trimethyllysine is present on Lys14. Substrate is bound by residues Asn123 and Thr173. The active-site Proton acceptor is Lys175. Lys177 lines the substrate pocket. 3 residues coordinate Mg(2+): Lys201, Asp203, and Glu204. Lys201 is subject to N6-carboxylysine. His294 serves as the catalytic Proton acceptor. Residues Arg295, His327, and Ser379 each contribute to the substrate site.

Belongs to the RuBisCO large chain family. Type I subfamily. In terms of assembly, heterohexadecamer of 8 large chains and 8 small chains; disulfide-linked. The disulfide link is formed within the large subunit homodimers. Requires Mg(2+) as cofactor. Post-translationally, the disulfide bond which can form in the large chain dimeric partners within the hexadecamer appears to be associated with oxidative stress and protein turnover.

Its subcellular location is the plastid. The protein resides in the chloroplast. The catalysed reaction is 2 (2R)-3-phosphoglycerate + 2 H(+) = D-ribulose 1,5-bisphosphate + CO2 + H2O. It catalyses the reaction D-ribulose 1,5-bisphosphate + O2 = 2-phosphoglycolate + (2R)-3-phosphoglycerate + 2 H(+). In terms of biological role, ruBisCO catalyzes two reactions: the carboxylation of D-ribulose 1,5-bisphosphate, the primary event in carbon dioxide fixation, as well as the oxidative fragmentation of the pentose substrate in the photorespiration process. Both reactions occur simultaneously and in competition at the same active site. The protein is Ribulose bisphosphate carboxylase large chain of Zygnema circumcarinatum (Green alga).